The chain runs to 1383 residues: PAS domain-containing serine/threonine-protein kinase (1383 aa).

Residue M1 is modified to N-acetylmethionine. S19 carries the post-translational modification Phosphoserine. Position 31 is a phosphothreonine (T31). 2 consecutive PAS domains span residues 117–188 and 333–400; these read SGSL…VEAD and YQAS…SVQL. At S1000 the chain carries Phosphoserine. The Protein kinase domain occupies 1059-1311; that stretch reads YNTISPLGSG…LEKLIRDPWV (253 aa). Residues 1065–1073, K1088, and 1142–1149 contribute to the ATP site; these read LGSGAFGFV and EKHGSGMD. The active-site Proton acceptor is D1188. D1206 contacts ATP. Phosphothreonine; by autocatalysis occurs at positions 1221 and 1225. Positions 1344-1383 are disordered; it reads GSRSPSEMAQREGLCGPPAPRETRGDQHCLHLKDPSLPVS. The segment covering 1364–1377 has biased composition (basic and acidic residues); it reads RETRGDQHCLHLKD.

It belongs to the protein kinase superfamily. CAMK Ser/Thr protein kinase family. Post-translationally, autophosphorylated on Thr-1221 and Thr-1225. Autophosphorylation is activated by phospholipids. Ubiquitously expressed. Strongly up-regulated in postmeiotic germ cells during spermatogenesis.

The protein resides in the cytoplasm. It localises to the nucleus. It carries out the reaction L-seryl-[protein] + ATP = O-phospho-L-seryl-[protein] + ADP + H(+). The enzyme catalyses L-threonyl-[protein] + ATP = O-phospho-L-threonyl-[protein] + ADP + H(+). Its activity is regulated as follows. Protein kinase activity is inhibited by the first PAS domain: binding of an unidentified ligand desinhibits the protein kinase activity. May be activated by autophosphorylation on Thr-1221 and Thr-1225. Autophosphorylation is enhanced upon phosphatidylinositol monophosphate (phosphatidylinositol 4-phosphate) binding and inhibited upon phosphatidylinositol bi- and tri-phosphate binding. In contrast, phosphorylation of target proteins is inhibited upon all phosphatidylinositol-binding (phosphatidylinositol mono- bi- and tri-phosphate). Its function is as follows. Serine/threonine-protein kinase involved in energy homeostasis and protein translation. Phosphorylates EEF1A1, GYS1, PDX1 and RPS6. Probably plays a role under changing environmental conditions (oxygen, glucose, nutrition), rather than under standard conditions. Acts as a sensor involved in energy homeostasis: regulates glycogen synthase synthesis by mediating phosphorylation of GYS1, leading to GYS1 inactivation. May be involved in glucose-stimulated insulin production in pancreas and regulation of glucagon secretion by glucose in alpha cells; however such data require additional evidences. May play a role in regulation of protein translation by phosphorylating EEF1A1, leading to increase translation efficiency. May also participate in respiratory regulation. The sequence is that of PAS domain-containing serine/threonine-protein kinase (Pask) from Mus musculus (Mouse).